A 231-amino-acid polypeptide reads, in one-letter code: Ribose-5-phosphate isomerase A (231 aa).

Substrate contacts are provided by residues 23–26 (SGST), 80–83 (DGAD), and 93–96 (KGGG). Catalysis depends on Glu102, which acts as the Proton acceptor. Lys120 is a substrate binding site.

Belongs to the ribose 5-phosphate isomerase family. Homodimer.

The enzyme catalyses aldehydo-D-ribose 5-phosphate = D-ribulose 5-phosphate. It functions in the pathway carbohydrate degradation; pentose phosphate pathway; D-ribose 5-phosphate from D-ribulose 5-phosphate (non-oxidative stage): step 1/1. Catalyzes the reversible conversion of ribose-5-phosphate to ribulose 5-phosphate. The polypeptide is Ribose-5-phosphate isomerase A (Prochlorococcus marinus subsp. pastoris (strain CCMP1986 / NIES-2087 / MED4)).